The following is a 932-amino-acid chain: Isoleucine--tRNA ligase (932 aa).

Positions 59–69 match the 'HIGH' region motif; that stretch reads PYANGTIHIGH. E562 provides a ligand contact to L-isoleucyl-5'-AMP. A 'KMSKS' region motif is present at residues 603 to 607; the sequence is KMSKS. K606 lines the ATP pocket. C899, C902, C915, and C918 together coordinate Zn(2+).

The protein belongs to the class-I aminoacyl-tRNA synthetase family. IleS type 1 subfamily. In terms of assembly, monomer. Zn(2+) is required as a cofactor.

The protein localises to the cytoplasm. The enzyme catalyses tRNA(Ile) + L-isoleucine + ATP = L-isoleucyl-tRNA(Ile) + AMP + diphosphate. Catalyzes the attachment of isoleucine to tRNA(Ile). As IleRS can inadvertently accommodate and process structurally similar amino acids such as valine, to avoid such errors it has two additional distinct tRNA(Ile)-dependent editing activities. One activity is designated as 'pretransfer' editing and involves the hydrolysis of activated Val-AMP. The other activity is designated 'posttransfer' editing and involves deacylation of mischarged Val-tRNA(Ile). This is Isoleucine--tRNA ligase from Pasteurella multocida (strain Pm70).